Reading from the N-terminus, the 440-residue chain is Xaa-Pro dipeptidase (440 aa).

The Mn(2+) site is built by Asp-246, Asp-257, His-337, Glu-382, and Glu-421.

It belongs to the peptidase M24B family. Bacterial-type prolidase subfamily. Requires Mn(2+) as cofactor.

It carries out the reaction Xaa-L-Pro dipeptide + H2O = an L-alpha-amino acid + L-proline. In terms of biological role, splits dipeptides with a prolyl residue in the C-terminal position. This Aeromonas hydrophila subsp. hydrophila (strain ATCC 7966 / DSM 30187 / BCRC 13018 / CCUG 14551 / JCM 1027 / KCTC 2358 / NCIMB 9240 / NCTC 8049) protein is Xaa-Pro dipeptidase.